The primary structure comprises 1378 residues: DNA-directed RNA polymerase subunit beta (1378 aa).

The protein belongs to the RNA polymerase beta chain family. As to quaternary structure, the RNAP catalytic core consists of 2 alpha, 1 beta, 1 beta' and 1 omega subunit. When a sigma factor is associated with the core the holoenzyme is formed, which can initiate transcription.

It catalyses the reaction RNA(n) + a ribonucleoside 5'-triphosphate = RNA(n+1) + diphosphate. Its function is as follows. DNA-dependent RNA polymerase catalyzes the transcription of DNA into RNA using the four ribonucleoside triphosphates as substrates. The polypeptide is DNA-directed RNA polymerase subunit beta (Campylobacter jejuni subsp. jejuni serotype O:23/36 (strain 81-176)).